The following is a 224-amino-acid chain: UPF0758 protein PSPA7_6095 (224 aa).

The MPN domain maps to 102 to 224 (VLESPQAVRD…PLSLAEYGWM (123 aa)). Histidine 173, histidine 175, and aspartate 186 together coordinate Zn(2+). The short motif at 173-186 (HNHPSGDARPSLAD) is the JAMM motif element.

Belongs to the UPF0758 family.

This Pseudomonas paraeruginosa (strain DSM 24068 / PA7) (Pseudomonas aeruginosa (strain PA7)) protein is UPF0758 protein PSPA7_6095.